A 293-amino-acid chain; its full sequence is Methoxy mycolic acid synthase MmaA3 (293 aa).

Residues 39-40 (YS), 78-80 (GCG), 100-105 (TLSKNQ), 129-130 (WA), and Ile142 contribute to the S-adenosyl-L-methionine site. Cys275 is a catalytic residue.

Belongs to the CFA/CMAS family.

The protein operates within lipid metabolism; mycolic acid biosynthesis. In terms of biological role, involved in the biosynthesis of methoxymycolic acid. It catalyzes the O-methylation of the hydroxy group of the hydroxymycolate to form a methyl ether. In Mycobacterium bovis (strain ATCC BAA-935 / AF2122/97), this protein is Methoxy mycolic acid synthase MmaA3 (cmaB).